A 498-amino-acid polypeptide reads, in one-letter code: XK-related protein 4 (498 aa).

The interval Ser24–Asp46 is disordered. Transmembrane regions (helical) follow at residues Cys81 to Leu101 and Tyr111 to Phe131. The interval Ser166–Arg203 is disordered. The span at Ala183–Thr198 shows a compositional bias: low complexity. Transmembrane regions (helical) follow at residues Leu302–Leu322 and Phe332–Leu352.

Belongs to the XK family.

The protein localises to the cell membrane. It catalyses the reaction a 1,2-diacyl-sn-glycero-3-phospho-L-serine(in) = a 1,2-diacyl-sn-glycero-3-phospho-L-serine(out). Functionally, phospholipid scramblase that promotes phosphatidylserine exposure on apoptotic cell surface. Phosphatidylserine is a specific marker only present at the surface of apoptotic cells and acts as a specific signal for engulfment. This Tetraodon nigroviridis (Spotted green pufferfish) protein is XK-related protein 4.